A 168-amino-acid chain; its full sequence is ATP synthase subunit b (168 aa).

Residues 10 to 30 form a helical membrane-spanning segment; the sequence is LYLGDMLFYLVSFLIMAALVW. The disordered stretch occupies residues 61–80; that stretch reads EAQKLAAKRQEELKGSRQEA.

Belongs to the ATPase B chain family. In terms of assembly, F-type ATPases have 2 components, F(1) - the catalytic core - and F(0) - the membrane proton channel. F(1) has five subunits: alpha(3), beta(3), gamma(1), delta(1), epsilon(1). F(0) has three main subunits: a(1), b(2) and c(10-14). The alpha and beta chains form an alternating ring which encloses part of the gamma chain. F(1) is attached to F(0) by a central stalk formed by the gamma and epsilon chains, while a peripheral stalk is formed by the delta and b chains.

The protein localises to the cell membrane. In terms of biological role, f(1)F(0) ATP synthase produces ATP from ADP in the presence of a proton or sodium gradient. F-type ATPases consist of two structural domains, F(1) containing the extramembraneous catalytic core and F(0) containing the membrane proton channel, linked together by a central stalk and a peripheral stalk. During catalysis, ATP synthesis in the catalytic domain of F(1) is coupled via a rotary mechanism of the central stalk subunits to proton translocation. Its function is as follows. Component of the F(0) channel, it forms part of the peripheral stalk, linking F(1) to F(0). The protein is ATP synthase subunit b of Limosilactobacillus fermentum (strain NBRC 3956 / LMG 18251) (Lactobacillus fermentum).